Here is a 183-residue protein sequence, read N- to C-terminus: MDTTNLVRRDIVIGSRRVSNYWWASVLLLGGSSFLVVGLSSRLGFDLVPFLPAGDIIFIPQGLVMCFYGLVGLVVSTYLWLTILWSVGGGYNEFNKQEGVMRIFRWGFPGRDRRIQLTCPLQDIEAIRVELQEGMNPRRTIYVRLKGKREVPLTRIGQPLTLAEIEKQAAELAGFLQVSLEGF.

Helical transmembrane passes span 21 to 43 (YWWA…SSRL) and 58 to 80 (FIPQ…TYLW).

This sequence belongs to the Ycf4 family.

The protein resides in the plastid. Its subcellular location is the chloroplast thylakoid membrane. Seems to be required for the assembly of the photosystem I complex. In Nephroselmis olivacea (Green alga), this protein is Photosystem I assembly protein Ycf4.